The chain runs to 293 residues: uncharacterized protein (293 aa).

The HTH lysR-type domain maps to 1 to 60 (MHITLRQLEVFAEVLKSGSTTQASVMLALSQSAVSAALTDLEGQLGVQLFDRVGKRLVVN). Positions 20-39 (TTQASVMLALSQSAVSAALT) form a DNA-binding region, H-T-H motif.

This sequence belongs to the LysR transcriptional regulatory family.

This is an uncharacterized protein from Escherichia coli O157:H7.